The sequence spans 371 residues: Queuine tRNA-ribosyltransferase (371 aa).

D89 acts as the Proton acceptor in catalysis. Residues D89–F93, D143, Q185, and G212 contribute to the substrate site. An RNA binding region spans residues G243–D249. D262 (nucleophile) is an active-site residue. Positions T267–R271 are RNA binding; important for wobble base 34 recognition. The Zn(2+) site is built by C300, C302, C305, and H331.

It belongs to the queuine tRNA-ribosyltransferase family. In terms of assembly, homodimer. Within each dimer, one monomer is responsible for RNA recognition and catalysis, while the other monomer binds to the replacement base PreQ1. The cofactor is Zn(2+).

The enzyme catalyses 7-aminomethyl-7-carbaguanine + guanosine(34) in tRNA = 7-aminomethyl-7-carbaguanosine(34) in tRNA + guanine. The protein operates within tRNA modification; tRNA-queuosine biosynthesis. Functionally, catalyzes the base-exchange of a guanine (G) residue with the queuine precursor 7-aminomethyl-7-deazaguanine (PreQ1) at position 34 (anticodon wobble position) in tRNAs with GU(N) anticodons (tRNA-Asp, -Asn, -His and -Tyr). Catalysis occurs through a double-displacement mechanism. The nucleophile active site attacks the C1' of nucleotide 34 to detach the guanine base from the RNA, forming a covalent enzyme-RNA intermediate. The proton acceptor active site deprotonates the incoming PreQ1, allowing a nucleophilic attack on the C1' of the ribose to form the product. After dissociation, two additional enzymatic reactions on the tRNA convert PreQ1 to queuine (Q), resulting in the hypermodified nucleoside queuosine (7-(((4,5-cis-dihydroxy-2-cyclopenten-1-yl)amino)methyl)-7-deazaguanosine). This is Queuine tRNA-ribosyltransferase from Nitrosomonas europaea (strain ATCC 19718 / CIP 103999 / KCTC 2705 / NBRC 14298).